A 119-amino-acid polypeptide reads, in one-letter code: MAFKDTGKTPVEPEVAIHRIRITLTSRNVKSLEKVCADLIRGAKEKNLKVKGPVRMPTKTLRITTRKTPCGEGSKTWDRFQMRIHKRLIDLHSPSEIVKQITSISIEPGVEVEVTIADA.

Alanine 2 is modified (N-acetylalanine). A Glycyl lysine isopeptide (Lys-Gly) (interchain with G-Cter in ubiquitin) cross-link involves residue lysine 4. Lysine 8 is subject to N6-succinyllysine; alternate. A Glycyl lysine isopeptide (Lys-Gly) (interchain with G-Cter in ubiquitin); alternate cross-link involves residue lysine 8. Residue threonine 9 is modified to Phosphothreonine. An N6-acetyllysine mark is found at lysine 34 and lysine 75. At serine 93 the chain carries Phosphoserine.

The protein belongs to the universal ribosomal protein uS10 family. Component of the 40S small ribosomal subunit. Polyubiquitinated by ZNF598 via 'Lys-63'-linked ubiquitin chains when a ribosome has stalled, initiating the ribosome quality control (RQC) pathway to degrade the potentially detrimental aberrant nascent polypeptide. Deubiquitinated by OTUD3 and USP21, antagonizing ZNF598 activity. Post-translationally, ufmylated by UFL1.

It is found in the cytoplasm. Its function is as follows. Component of the small ribosomal subunit. The ribosome is a large ribonucleoprotein complex responsible for the synthesis of proteins in the cell. In Rattus norvegicus (Rat), this protein is Small ribosomal subunit protein uS10 (Rps20).